A 698-amino-acid polypeptide reads, in one-letter code: PWWP domain-containing DNA repair factor 3A (698 aa).

Disordered stretches follow at residues 102 to 145 (TSLS…EDDQ) and 159 to 386 (CSPK…EEPP). A Phosphoserine modification is found at Ser-105. Positions 129 to 139 (SQVSSAPSPSF) are enriched in polar residues. A phosphoserine mark is found at Ser-165, Ser-168, and Ser-170. Over residues 200-211 (DESQNGSGSQLD) the composition is skewed to polar residues. 2 stretches are compositionally biased toward basic and acidic residues: residues 212 to 235 (HGQE…RGKA) and 341 to 350 (RAGDSDRPEE). Phosphoserine is present on residues Ser-355 and Ser-356. Acidic residues predominate over residues 370 to 384 (EEEEEEEEEEEEEEE). The 62-residue stretch at 399–460 (VGMLVWLKYQ…KHFDCKEKHA (62 aa)) folds into the PWWP domain.

This sequence belongs to the PWWP3A family. In terms of assembly, interacts with TP53BP1 (via BRCT domain); the interaction is not dependent on its phosphorylation status. Binds nucleosomes. Interacts with trimethylated 'Lys-36' of histone H3 (H3K36me3) (in vitro).

The protein resides in the nucleus. Its function is as follows. Involved in the DNA damage response pathway by contributing to the maintenance of chromatin architecture. Recruited to the vicinity of DNA breaks by TP53BP1 and plays an accessory role to facilitate damage-induced chromatin changes and promoting chromatin relaxation. Required for efficient DNA repair and cell survival following DNA damage. This is PWWP domain-containing DNA repair factor 3A from Rattus norvegicus (Rat).